A 104-amino-acid chain; its full sequence is SPbeta prophage-derived stress response protein SCP1 (104 aa).

It is found in the cytoplasm. The sequence is that of SPbeta prophage-derived stress response protein SCP1 (yorD) from Bacillus subtilis (strain 168).